The chain runs to 442 residues: ATP-dependent protease ATPase subunit HslU (442 aa).

Residues isoleucine 18, 60-65 (GVGKTE), aspartate 255, glutamate 320, and arginine 392 each bind ATP.

It belongs to the ClpX chaperone family. HslU subfamily. As to quaternary structure, a double ring-shaped homohexamer of HslV is capped on each side by a ring-shaped HslU homohexamer. The assembly of the HslU/HslV complex is dependent on binding of ATP.

It is found in the cytoplasm. In terms of biological role, ATPase subunit of a proteasome-like degradation complex; this subunit has chaperone activity. The binding of ATP and its subsequent hydrolysis by HslU are essential for unfolding of protein substrates subsequently hydrolyzed by HslV. HslU recognizes the N-terminal part of its protein substrates and unfolds these before they are guided to HslV for hydrolysis. The sequence is that of ATP-dependent protease ATPase subunit HslU from Shewanella putrefaciens (strain CN-32 / ATCC BAA-453).